The chain runs to 410 residues: Translation initiation factor 2 subunit gamma (410 aa).

Positions 9 to 202 (QAEVNIGMVG…AIEEFIPTPE (194 aa)) constitute a tr-type G domain. Residues 18-25 (GHVDHGKT) are G1. Mg(2+) is bound by residues Asp21, Thr25, Gly46, and Thr48. Residue 21–26 (DHGKTT) participates in GTP binding. The tract at residues 46–50 (GITIK) is G2. Cys61, Cys64, Cys73, and Cys76 together coordinate Zn(2+). The G3 stretch occupies residues 90-93 (DAPG). GTP is bound by residues 145–148 (NKIE) and 180–182 (SAL). Positions 145–148 (NKIE) are G4. Positions 180–182 (SAL) are G5.

The protein belongs to the TRAFAC class translation factor GTPase superfamily. Classic translation factor GTPase family. EIF2G subfamily. Heterotrimer composed of an alpha, a beta and a gamma chain. Mg(2+) serves as cofactor.

The enzyme catalyses GTP + H2O = GDP + phosphate + H(+). EIF-2 functions in the early steps of protein synthesis by forming a ternary complex with GTP and initiator tRNA. The polypeptide is Translation initiation factor 2 subunit gamma (Thermococcus onnurineus (strain NA1)).